The following is a 448-amino-acid chain: Tubulin beta chain (448 aa).

GTP is bound by residues Gln-11, Glu-69, Ser-138, Gly-142, Thr-143, Gly-144, Asn-204, and Asn-226. Glu-69 contacts Mg(2+). The tract at residues 429–448 (SISDGEEQPYAEEAAYEAEE) is disordered. Residues 432–448 (DGEEQPYAEEAAYEAEE) are compositionally biased toward acidic residues.

This sequence belongs to the tubulin family. In terms of assembly, dimer of alpha and beta chains. A typical microtubule is a hollow water-filled tube with an outer diameter of 25 nm and an inner diameter of 15 nM. Alpha-beta heterodimers associate head-to-tail to form protofilaments running lengthwise along the microtubule wall with the beta-tubulin subunit facing the microtubule plus end conferring a structural polarity. Microtubules usually have 13 protofilaments but different protofilament numbers can be found in some organisms and specialized cells. The cofactor is Mg(2+).

It localises to the cytoplasm. It is found in the cytoskeleton. In terms of biological role, tubulin is the major constituent of microtubules, a cylinder consisting of laterally associated linear protofilaments composed of alpha- and beta-tubulin heterodimers. Microtubules grow by the addition of GTP-tubulin dimers to the microtubule end, where a stabilizing cap forms. Below the cap, tubulin dimers are in GDP-bound state, owing to GTPase activity of alpha-tubulin. This is Tubulin beta chain from Aspergillus fumigatus (strain ATCC MYA-4609 / CBS 101355 / FGSC A1100 / Af293) (Neosartorya fumigata).